The following is a 991-amino-acid chain: Translation initiation factor IF-2 (991 aa).

2 disordered regions span residues 126-220 (QADH…DVGE) and 325-359 (VKAA…VDEK). Composition is skewed to polar residues over residues 138 to 160 (QTES…TEPA) and 201 to 210 (PAAQTESAVQ). Residues 326–340 (KAAGDGDTAPAADDA) show a composition bias toward low complexity. Basic residues predominate over residues 343–353 (GKKKPGKKKKK). The tr-type G domain occupies 488 to 658 (IRPPVVTIMG…LTEAEIRELK (171 aa)). The G1 stretch occupies residues 497–504 (GHVDHGKT). 497–504 (GHVDHGKT) lines the GTP pocket. The tract at residues 522 to 526 (GITQH) is G2. Residues 544 to 547 (DTPG) are G3. Residues 544–548 (DTPGH) and 598–601 (NKID) contribute to the GTP site. A G4 region spans residues 598-601 (NKID). The G5 stretch occupies residues 634 to 636 (SAK).

This sequence belongs to the TRAFAC class translation factor GTPase superfamily. Classic translation factor GTPase family. IF-2 subfamily.

The protein resides in the cytoplasm. Its function is as follows. One of the essential components for the initiation of protein synthesis. Protects formylmethionyl-tRNA from spontaneous hydrolysis and promotes its binding to the 30S ribosomal subunits. Also involved in the hydrolysis of GTP during the formation of the 70S ribosomal complex. This chain is Translation initiation factor IF-2, found in Chlorobium phaeobacteroides (strain DSM 266 / SMG 266 / 2430).